A 153-amino-acid polypeptide reads, in one-letter code: Acetylacetone-cleaving enzyme (153 aa).

As to quaternary structure, homotetramer. Fe cation is required as a cofactor.

It carries out the reaction acetylacetone + O2 = methylglyoxal + acetate + H(+). It participates in xenobiotic degradation; acetylacetone degradation. Its function is as follows. Cleaves acetylacetone to equimolar amounts of methylglyoxal and acetate, consuming one equivalent of molecular oxygen. The protein is Acetylacetone-cleaving enzyme (dke1) of Acinetobacter johnsonii.